The following is a 1472-amino-acid chain: Vacuolar cation-transporting ATPase YPK9 (1472 aa).

Met1 carries the N-acetylmethionine modification. 2 stretches are compositionally biased toward polar residues: residues 1 to 12 (MDIPSSNQIQHG) and 72 to 87 (SFQS…SGNL). Disordered stretches follow at residues 1-32 (MDIP…TATT), 71-115 (HSFQ…SRNP), and 179-273 (AKSY…DDVH). Topologically, residues 1 to 293 (MDIPSSNQIQ…YHEKFYPQYA (293 aa)) are cytoplasmic. Residue Thr95 is modified to Phosphothreonine. Composition is skewed to low complexity over residues 103–115 (SSAE…SRNP) and 211–222 (SATHSSSSLSRY). Ser108 is subject to Phosphoserine. A compositionally biased stretch (acidic residues) spans 234–243 (SQTDEILEDE). Residues 294–315 (PNLHYQRFYIAEEDLVIGIAAY) form a helical membrane-spanning segment. Topologically, residues 316–321 (QTSKFW) are vacuolar. The chain crosses the membrane as a helical span at residues 322-344 (YIIYNLCCFLTFGLVYLLTRWLP). The Cytoplasmic portion of the chain corresponds to 345 to 488 (HLKVKLYGVK…INLRMKTTSE (144 aa)). A helical transmembrane segment spans residues 489-511 (ILFNEVLHPFYVFQVFSIILWGI). The Vacuolar segment spans residues 512–514 (DEY). A helical membrane pass occupies residues 515–533 (YYYAACIFLISVLSIFDSL). At 534-693 (NEQKKVSRNL…PTGFKFYRDS (160 aa)) the chain is on the cytoplasmic side. The chain crosses the membrane as a helical span at residues 694-713 (FKYIGFMSLIAIFGFCVSCV). The Vacuolar portion of the chain corresponds to 714 to 726 (QFIKLGLDKKTMI). A helical transmembrane segment spans residues 727–748 (LRALDIITIVVPPALPATLTIG). Residues 749–1244 (TNFALSRLKE…ALVTSFACFQ (496 aa)) are Cytoplasmic-facing. Asp781 (4-aspartylphosphate intermediate) is an active-site residue. Phosphoserine is present on residues Ser1117 and Ser1120. Residues Asp1187 and Asp1191 each coordinate Mg(2+). A helical transmembrane segment spans residues 1245–1264 (YMSLYSAIQFITITILYSRG). Residues 1265 to 1271 (SNLGDFQ) are Vacuolar-facing. The chain crosses the membrane as a helical span at residues 1272 to 1289 (FLYIDLLLIVPIAICMSW). At 1290-1307 (SKSYEKIDKKRPSANLVS) the chain is on the cytoplasmic side. The chain crosses the membrane as a helical span at residues 1308-1331 (PKILVPLLISVFLVFLFQFIPWII). Topologically, residues 1332–1351 (VQKMSWYIKPIVGGDDAVQS) are vacuolar. A helical transmembrane segment spans residues 1352 to 1374 (SDNTVLFFVSNFQYILTAIVLSV). Residues 1375–1387 (GPPYREPMSKNFE) lie on the Cytoplasmic side of the membrane. Residues 1388 to 1407 (FIVDITVSIGASLLLMTLDT) traverse the membrane as a helical segment. The Vacuolar portion of the chain corresponds to 1408–1423 (ESYLGKMLQLTPISNS). Residues 1424-1446 (FTMFIIVWVILNYYAQLYIPPSI) traverse the membrane as a helical segment. Topologically, residues 1447–1472 (KGWLKKKKSSKKYKLLIQEEMKLKEV) are cytoplasmic.

It belongs to the cation transport ATPase (P-type) (TC 3.A.3) family. Type V subfamily.

It localises to the vacuole membrane. The catalysed reaction is ATP + H2O = ADP + phosphate + H(+). Functionally, vacuolar transporter which plays a role in sequestration of divalent heavy metal ions. The sequence is that of Vacuolar cation-transporting ATPase YPK9 (YPK9) from Saccharomyces cerevisiae (strain ATCC 204508 / S288c) (Baker's yeast).